Reading from the N-terminus, the 541-residue chain is Chaperonin GroEL 2 (541 aa).

Residues 30–33 (TLGP), lysine 51, 87–91 (DGTTT), glycine 415, and aspartate 496 contribute to the ATP site.

This sequence belongs to the chaperonin (HSP60) family. In terms of assembly, forms a cylinder of 14 subunits composed of two heptameric rings stacked back-to-back. Interacts with the co-chaperonin GroES.

It localises to the cytoplasm. It catalyses the reaction ATP + H2O + a folded polypeptide = ADP + phosphate + an unfolded polypeptide.. In terms of biological role, together with its co-chaperonin GroES, plays an essential role in assisting protein folding. The GroEL-GroES system forms a nano-cage that allows encapsulation of the non-native substrate proteins and provides a physical environment optimized to promote and accelerate protein folding. In Gluconacetobacter diazotrophicus (strain ATCC 49037 / DSM 5601 / CCUG 37298 / CIP 103539 / LMG 7603 / PAl5), this protein is Chaperonin GroEL 2.